The chain runs to 808 residues: DNA replication licensing factor MCM3 (808 aa).

A2 carries the post-translational modification N-acetylalanine. 2 positions are modified to phosphoserine: S160 and S275. Position 293 is an N6-acetyllysine (K293). Residues 295 to 502 enclose the MCM domain; it reads IFDQLAKSLA…QDREISDHVL (208 aa). The ADP site is built by Q353, L393, E394, A395, and A397. Positions 477-480 match the Arginine finger motif; the sequence is SRFD. A523 is a binding site for ATP. The residue at position 535 (S535) is a Phosphoserine; by ATM. Residue K547 is modified to N6-acetyllysine. S611 carries the phosphoserine modification. The segment at 662 to 739 is disordered; sequence KKRKKRSEDE…ETKESQKVEL (78 aa). R664 contacts ATP. Phosphoserine is present on residues S668 and S672. 2 stretches are compositionally biased toward acidic residues: residues 670–681 and 704–717; these read DESETEDEEEKS and SYDP…EEEM. The residue at position 674 (T674) is a Phosphothreonine. Residue S681 is modified to Phosphoserine. Residue Y708 is modified to Phosphotyrosine. At S711 the chain carries Phosphoserine. Phosphothreonine occurs at positions 713, 722, and 725. Positions 727–739 are enriched in basic and acidic residues; that stretch reads DSQETKESQKVEL. Phosphoserine occurs at positions 728 and 734.

This sequence belongs to the MCM family. In terms of assembly, component of the MCM2-7 complex. The complex forms a toroidal hexameric ring with the proposed subunit order MCM2-MCM6-MCM4-MCM7-MCM3-MCM5. Component of the CMG helicase complex, a hexameric ring of related MCM2-7 subunits stabilized by CDC45 and the tetrameric GINS complex. Associated with the replication-specific DNA polymerase alpha. Interacts with MCMBP. Interacts with ANKRD17. Interacts with MCM3AP isoform MCM3AP; this interaction leads to MCM3 acetylation. Acetylated by MCM3AP. In terms of processing, O-glycosylated (O-GlcNAcylated), in a cell cycle-dependent manner.

Its subcellular location is the nucleus. It localises to the chromosome. It catalyses the reaction ATP + H2O = ADP + phosphate + H(+). Its function is as follows. Acts as a component of the MCM2-7 complex (MCM complex) which is the replicative helicase essential for 'once per cell cycle' DNA replication initiation and elongation in eukaryotic cells. Core component of CDC45-MCM-GINS (CMG) helicase, the molecular machine that unwinds template DNA during replication, and around which the replisome is built. The active ATPase sites in the MCM2-7 ring are formed through the interaction surfaces of two neighboring subunits such that a critical structure of a conserved arginine finger motif is provided in trans relative to the ATP-binding site of the Walker A box of the adjacent subunit. The six ATPase active sites, however, are likely to contribute differentially to the complex helicase activity. Required for the entry in S phase and for cell division. This Homo sapiens (Human) protein is DNA replication licensing factor MCM3.